A 323-amino-acid polypeptide reads, in one-letter code: Homoserine kinase (323 aa).

97–107 (PHGRGMGSSGA) contacts ATP.

It belongs to the GHMP kinase family. Homoserine kinase subfamily.

The protein localises to the cytoplasm. The catalysed reaction is L-homoserine + ATP = O-phospho-L-homoserine + ADP + H(+). Its pathway is amino-acid biosynthesis; L-threonine biosynthesis; L-threonine from L-aspartate: step 4/5. Its function is as follows. Catalyzes the ATP-dependent phosphorylation of L-homoserine to L-homoserine phosphate. This Leifsonia xyli subsp. xyli (strain CTCB07) protein is Homoserine kinase.